A 161-amino-acid chain; its full sequence is Endoribonuclease YbeY (161 aa).

Zn(2+) is bound by residues histidine 127, histidine 131, and histidine 137.

It belongs to the endoribonuclease YbeY family. Zn(2+) serves as cofactor.

It localises to the cytoplasm. Functionally, single strand-specific metallo-endoribonuclease involved in late-stage 70S ribosome quality control and in maturation of the 3' terminus of the 16S rRNA. This chain is Endoribonuclease YbeY, found in Listeria monocytogenes serotype 4b (strain CLIP80459).